We begin with the raw amino-acid sequence, 369 residues long: Glutamate 5-kinase (369 aa).

K9 provides a ligand contact to ATP. Substrate is bound by residues S49, D136, and N148. Residues 168–169 (TD) and 210–216 (TGGMLTK) each bind ATP. The PUA domain occupies 275–355 (QGSIWVDKGA…KGVLIYRDDW (81 aa)).

The protein belongs to the glutamate 5-kinase family.

The protein localises to the cytoplasm. The enzyme catalyses L-glutamate + ATP = L-glutamyl 5-phosphate + ADP. The protein operates within amino-acid biosynthesis; L-proline biosynthesis; L-glutamate 5-semialdehyde from L-glutamate: step 1/2. Its function is as follows. Catalyzes the transfer of a phosphate group to glutamate to form L-glutamate 5-phosphate. In Streptococcus pneumoniae serotype 2 (strain D39 / NCTC 7466), this protein is Glutamate 5-kinase.